A 24-amino-acid polypeptide reads, in one-letter code: Lycosin-I (24 aa).

It belongs to the cationic peptide 04 (cupiennin) family. 05 subfamily. In terms of assembly, monomer in solution. Small size oligomers on the lipid membranes.

The protein resides in the secreted. The protein localises to the target cell membrane. Functionally, antimicrobial peptide that inhibits many reference strains of bacteria and fungi. Is potent against Candida species and multidrug-resistant Acinetobacter baumannii (MDRAB). Is probably localized in the cytoplasm after being transported through the cell wall and membrane. Is able to interact with cell membranes and enter into cell plasma to activate the mitochondrial death pathway to sensitize cancer cells for apoptosis, as well as up-regulates p27 to inhibit cell proliferation. It shows very low effect on normal cells, such as erythrocytes, Hek293t cells. It also potently inhibits tumor cell growth in vitro, and suppresses various tumor growth in vivo when tested in human cancer xenograft models. It interacts with the cell membrane and is then internalized into the cytoplasm of cancer cells to initiate the programmable cell death. In addition, this peptide has the therapeutic effects of anti-hypertension by endothelium-dependent vasodilatation via the NO/sGC/cGMP signaling pathway. In vivo, this peptide also shows a significant ability to inhibit T.gondii invasion and proliferation, making it a potential alternative agent for the treatment of toxoplasmosis. In Lycosa singoriensis (Wolf spider), this protein is Lycosin-I.